A 515-amino-acid chain; its full sequence is Pisatin demethylase (515 aa).

Heme is bound at residue Cys-453.

Belongs to the cytochrome P450 family. Requires heme as cofactor.

In terms of biological role, can detoxify the phytoalexin pisatin from garden pea. Pisatin is an antimicrobial compound produced by pea in response to infection by plant pathogens. This is Pisatin demethylase (PDAT9) from Fusarium vanettenii (Neocosmospora pisi).